Here is a 228-residue protein sequence, read N- to C-terminus: Acyl-protein thioesterase 1 (228 aa).

Catalysis depends on charge relay system residues Ser119, Asp174, and His208.

The protein belongs to the AB hydrolase superfamily. AB hydrolase 2 family.

The protein localises to the cytoplasm. It is found in the nucleus. The catalysed reaction is S-hexadecanoyl-L-cysteinyl-[protein] + H2O = L-cysteinyl-[protein] + hexadecanoate + H(+). Functionally, hydrolyzes fatty acids from S-acylated cysteine residues in proteins with a strong preference for palmitoylated G-alpha proteins over other acyl substrates. Mediates the deacylation of G-alpha proteins such as GPA1 in vivo, but has weak or no activity toward palmitoylated Ras proteins. Has weak lysophospholipase activity in vitro; however such activity may not exist in vivo. This is Acyl-protein thioesterase 1 from Kluyveromyces lactis (strain ATCC 8585 / CBS 2359 / DSM 70799 / NBRC 1267 / NRRL Y-1140 / WM37) (Yeast).